A 218-amino-acid polypeptide reads, in one-letter code: Adenylate kinase (218 aa).

10–15 (GAGKGT) contacts ATP. The segment at 30 to 59 (STGDMLRAAIAKGTPLGLSAQKIMESGGLV) is NMP. Residues threonine 31, arginine 36, 57–59 (GLV), 85–88 (GFPR), and glutamine 92 contribute to the AMP site. The tract at residues 122-159 (GRRIHQPSGRVYHVVNQPPKNPGVDDITGEPLIQRDDD) is LID. ATP is bound by residues arginine 123 and 132 to 133 (VY). Residues arginine 156 and arginine 167 each coordinate AMP. Glycine 203 is an ATP binding site.

This sequence belongs to the adenylate kinase family. As to quaternary structure, monomer.

It is found in the cytoplasm. The catalysed reaction is AMP + ATP = 2 ADP. It functions in the pathway purine metabolism; AMP biosynthesis via salvage pathway; AMP from ADP: step 1/1. Its function is as follows. Catalyzes the reversible transfer of the terminal phosphate group between ATP and AMP. Plays an important role in cellular energy homeostasis and in adenine nucleotide metabolism. In Legionella pneumophila (strain Corby), this protein is Adenylate kinase.